A 456-amino-acid chain; its full sequence is MLNNAMSVVILAAGKGTRMYSDLPKVLHTLAGKAMVQHVIDAANELGAAHVHLVYGHGGDLLKQALKDDNLNWVLQAEQLGTGHAMQQAAPFFADDEDILMLYGDVPLISVETLQRLRDAKPQGGIGLLTVKLDDPTGYGRITRENGKVTGIVEHKDATDEQRQIQEINTGILIANGADMKRWLAKLTNNNAQGEYYITDIIALAYQEGREIVAVHPQRLSEVEGVNNRLQLSRLERVYQFEQAEKLLLAGVMLRDPARFDLRGTLTHGRDVEIDTNVIIEGNVTLGHRVKIGTGCVIKNSVIGDDCEISPYTVVEDANLAAACTIGPFARLRPGAELLEGAHVGNFVEMKKARLGKGSKAGHLTYLGDAEVGDNVNIGAGTITCNYDGANKFKTIIGDDVFVGSDTQLVAPVTVGKGATIAAGTTVTRNVGENALAISRVPQSQKEGWRRPVKKK.

Residues 1–229 form a pyrophosphorylase region; the sequence is MLNNAMSVVI…LSEVEGVNNR (229 aa). UDP-N-acetyl-alpha-D-glucosamine contacts are provided by residues 11 to 14, Lys25, Gln76, 81 to 82, 103 to 105, Gly140, Glu154, Asn169, and Asn227; these read LAAG, GT, and YGD. Asp105 contacts Mg(2+). Asn227 serves as a coordination point for Mg(2+). Residues 230-250 form a linker region; that stretch reads LQLSRLERVYQFEQAEKLLLA. Positions 251–456 are N-acetyltransferase; that stretch reads GVMLRDPARF…EGWRRPVKKK (206 aa). Residues Arg333 and Lys351 each coordinate UDP-N-acetyl-alpha-D-glucosamine. His363 (proton acceptor) is an active-site residue. Positions 366 and 377 each coordinate UDP-N-acetyl-alpha-D-glucosamine. Residues Ala380, 386–387, Ser405, Ala423, and Arg440 contribute to the acetyl-CoA site; that span reads NY.

In the N-terminal section; belongs to the N-acetylglucosamine-1-phosphate uridyltransferase family. This sequence in the C-terminal section; belongs to the transferase hexapeptide repeat family. In terms of assembly, homotrimer. It depends on Mg(2+) as a cofactor.

Its subcellular location is the cytoplasm. It carries out the reaction alpha-D-glucosamine 1-phosphate + acetyl-CoA = N-acetyl-alpha-D-glucosamine 1-phosphate + CoA + H(+). The enzyme catalyses N-acetyl-alpha-D-glucosamine 1-phosphate + UTP + H(+) = UDP-N-acetyl-alpha-D-glucosamine + diphosphate. It functions in the pathway nucleotide-sugar biosynthesis; UDP-N-acetyl-alpha-D-glucosamine biosynthesis; N-acetyl-alpha-D-glucosamine 1-phosphate from alpha-D-glucosamine 6-phosphate (route II): step 2/2. Its pathway is nucleotide-sugar biosynthesis; UDP-N-acetyl-alpha-D-glucosamine biosynthesis; UDP-N-acetyl-alpha-D-glucosamine from N-acetyl-alpha-D-glucosamine 1-phosphate: step 1/1. The protein operates within bacterial outer membrane biogenesis; LPS lipid A biosynthesis. Functionally, catalyzes the last two sequential reactions in the de novo biosynthetic pathway for UDP-N-acetylglucosamine (UDP-GlcNAc). The C-terminal domain catalyzes the transfer of acetyl group from acetyl coenzyme A to glucosamine-1-phosphate (GlcN-1-P) to produce N-acetylglucosamine-1-phosphate (GlcNAc-1-P), which is converted into UDP-GlcNAc by the transfer of uridine 5-monophosphate (from uridine 5-triphosphate), a reaction catalyzed by the N-terminal domain. This chain is Bifunctional protein GlmU, found in Escherichia coli O7:K1 (strain IAI39 / ExPEC).